The chain runs to 277 residues: MEMO1 family protein CTN_0605 (277 aa).

Belongs to the MEMO1 family.

In Thermotoga neapolitana (strain ATCC 49049 / DSM 4359 / NBRC 107923 / NS-E), this protein is MEMO1 family protein CTN_0605.